The primary structure comprises 321 residues: Gibberellin 2-beta-dioxygenase 4 (321 aa).

One can recognise a Fe2OG dioxygenase domain in the interval 156-269; sequence DSDSVLRVNH…RLSTAYFAGP (114 aa). 3 residues coordinate Fe cation: His-193, Asp-195, and His-250. Arg-260 is a catalytic residue.

This sequence belongs to the iron/ascorbate-dependent oxidoreductase family. GA2OX subfamily. Fe(2+) serves as cofactor. In terms of tissue distribution, expressed at the base of the shoot apical meristem and developing leaf primordia.

It catalyses the reaction gibberellin A1 + 2-oxoglutarate + O2 = gibberellin A8 + succinate + CO2. It functions in the pathway plant hormone biosynthesis; gibberellin biosynthesis. Its function is as follows. Catalyzes the 2-beta-hydroxylation of several biologically active gibberellins, leading to the homeostatic regulation of their endogenous level. Catabolism of gibberellins (GAs) plays a central role in plant development. Converts GA9/GA20 to GA51/GA29 and GA4/GA1 to GA34/GA8. In Arabidopsis thaliana (Mouse-ear cress), this protein is Gibberellin 2-beta-dioxygenase 4 (GA2OX4).